Reading from the N-terminus, the 379-residue chain is Cytochrome b (379 aa).

4 helical membrane-spanning segments follow: residues 33 to 53, 77 to 98, 113 to 133, and 178 to 198; these read FGSLLGICLGLQIITGLFLAM, WLIRYLHANGASMFFILLYLHI, WNIGILLLFAVMATAFMGYVL, and FFAFHFILPFIIPALVMIHFF. Heme b contacts are provided by H83 and H97. Heme b contacts are provided by H182 and H196. H201 serves as a coordination point for a ubiquinone. 4 consecutive transmembrane segments (helical) span residues 226–246, 288–308, 320–340, and 347–367; these read IKDIMGLLIMMLALMSLVLFS, LGGVLALVLSILVLALFPMLH, FSQCLLWMLTANLFILTWIGG, and YITIGQLASINYFFTILIVSR.

The protein belongs to the cytochrome b family. In terms of assembly, the cytochrome bc1 complex contains 11 subunits: 3 respiratory subunits (MT-CYB, CYC1 and UQCRFS1), 2 core proteins (UQCRC1 and UQCRC2) and 6 low-molecular weight proteins (UQCRH/QCR6, UQCRB/QCR7, UQCRQ/QCR8, UQCR10/QCR9, UQCR11/QCR10 and a cleavage product of UQCRFS1). This cytochrome bc1 complex then forms a dimer. The cofactor is heme b.

The protein resides in the mitochondrion inner membrane. Component of the ubiquinol-cytochrome c reductase complex (complex III or cytochrome b-c1 complex) that is part of the mitochondrial respiratory chain. The b-c1 complex mediates electron transfer from ubiquinol to cytochrome c. Contributes to the generation of a proton gradient across the mitochondrial membrane that is then used for ATP synthesis. In Dolichotis patagonum (Patagonian mara), this protein is Cytochrome b (MT-CYB).